The primary structure comprises 278 residues: 4-deoxy-L-threo-5-hexosulose-uronate ketol-isomerase (278 aa).

The Zn(2+) site is built by histidine 196, histidine 198, glutamate 203, and histidine 245.

The protein belongs to the KduI family. Requires Zn(2+) as cofactor.

The catalysed reaction is 5-dehydro-4-deoxy-D-glucuronate = 3-deoxy-D-glycero-2,5-hexodiulosonate. The protein operates within glycan metabolism; pectin degradation; 2-dehydro-3-deoxy-D-gluconate from pectin: step 4/5. Functionally, catalyzes the isomerization of 5-dehydro-4-deoxy-D-glucuronate to 3-deoxy-D-glycero-2,5-hexodiulosonate. In Yersinia enterocolitica serotype O:8 / biotype 1B (strain NCTC 13174 / 8081), this protein is 4-deoxy-L-threo-5-hexosulose-uronate ketol-isomerase.